Reading from the N-terminus, the 418-residue chain is Serine/threonine transporter SstT (418 aa).

8 consecutive transmembrane segments (helical) span residues 21–41 (ILIG…AAIA), 49–69 (FVGA…IASI), 83–103 (ILFL…VVSF), 142–162 (ALLN…GIAL), 190–210 (FAPL…GFGA), 217–237 (LLVV…PLIV), 299–319 (MAGA…TLGI), and 331–351 (VVAA…LLLI).

It belongs to the dicarboxylate/amino acid:cation symporter (DAACS) (TC 2.A.23) family.

Its subcellular location is the cell inner membrane. It carries out the reaction L-serine(in) + Na(+)(in) = L-serine(out) + Na(+)(out). The catalysed reaction is L-threonine(in) + Na(+)(in) = L-threonine(out) + Na(+)(out). Involved in the import of serine and threonine into the cell, with the concomitant import of sodium (symport system). The chain is Serine/threonine transporter SstT from Yersinia pseudotuberculosis serotype O:1b (strain IP 31758).